We begin with the raw amino-acid sequence, 125 residues long: Protein U2 (125 aa).

Belongs to the nanovirus U2 protein family.

This Milk vetch dwarf virus (isolate N) (MDV) protein is Protein U2 (DNA-U2).